Consider the following 283-residue polypeptide: Orotidine 5'-phosphate decarboxylase (283 aa).

The active-site Proton donor is K97.

It belongs to the OMP decarboxylase family. Type 2 subfamily.

The catalysed reaction is orotidine 5'-phosphate + H(+) = UMP + CO2. Its pathway is pyrimidine metabolism; UMP biosynthesis via de novo pathway; UMP from orotate: step 2/2. This is Orotidine 5'-phosphate decarboxylase from Clostridium botulinum (strain Kyoto / Type A2).